We begin with the raw amino-acid sequence, 340 residues long: L-threonine 3-dehydrogenase (340 aa).

Zn(2+) is bound at residue Cys-38. Active-site charge relay system residues include Thr-40 and His-43. His-63, Glu-64, Cys-93, Cys-96, Cys-99, and Cys-107 together coordinate Zn(2+). Residues Ile-175, Asp-195, Arg-200, 261–263, and 285–286 each bind NAD(+); these read LGI and IY.

Belongs to the zinc-containing alcohol dehydrogenase family. As to quaternary structure, homotetramer. Requires Zn(2+) as cofactor.

It localises to the cytoplasm. It carries out the reaction L-threonine + NAD(+) = (2S)-2-amino-3-oxobutanoate + NADH + H(+). It functions in the pathway amino-acid degradation; L-threonine degradation via oxydo-reductase pathway; glycine from L-threonine: step 1/2. In terms of biological role, catalyzes the NAD(+)-dependent oxidation of L-threonine to 2-amino-3-ketobutyrate. In Xanthomonas campestris pv. campestris (strain ATCC 33913 / DSM 3586 / NCPPB 528 / LMG 568 / P 25), this protein is L-threonine 3-dehydrogenase.